Reading from the N-terminus, the 364-residue chain is Palmitoyltransferase ZDHHC9 (364 aa).

The Cytoplasmic portion of the chain corresponds to Met-1–Lys-35. Residues Gly-36–Glu-56 form a helical membrane-spanning segment. The Lumenal segment spans residues Cys-57–Gln-63. The chain crosses the membrane as a helical span at residues Gln-64 to Leu-84. Over Arg-85–Tyr-183 the chain is Cytoplasmic. The DHHC domain maps to Lys-139 to Leu-189. Cys-169 acts as the S-palmitoyl cysteine intermediate in catalysis. Residues Phe-184–Val-204 traverse the membrane as a helical segment. The Lumenal segment spans residues Tyr-205 to Glu-228. The chain crosses the membrane as a helical span at residues Val-229 to Leu-249. The Cytoplasmic portion of the chain corresponds to Val-250–Lys-364. The segment at Pro-303–Lys-364 is disordered. Positions Arg-310–Pro-323 are enriched in polar residues. Pro residues predominate over residues Glu-346 to Pro-356.

This sequence belongs to the DHHC palmitoyltransferase family. ERF2/ZDHHC9 subfamily. In terms of assembly, interacts with GOLGA7.

The protein localises to the endoplasmic reticulum membrane. The protein resides in the golgi apparatus membrane. The enzyme catalyses L-cysteinyl-[protein] + hexadecanoyl-CoA = S-hexadecanoyl-L-cysteinyl-[protein] + CoA. Functionally, palmitoyltransferase that catalyzes the addition of palmitate onto various protein substrates, such as ADRB2, GSDMD, HRAS, NRAS and CGAS. The ZDHHC9-GOLGA7 complex is a palmitoyltransferase specific for HRAS and NRAS. May have a palmitoyltransferase activity toward the beta-2 adrenergic receptor/ADRB2 and therefore regulate G protein-coupled receptor signaling. Acts as a regulator of innate immunity by catalyzing palmitoylation of CGAS, thereby promoting CGAS homodimerization and cyclic GMP-AMP synthase activity. Activates pyroptosis by catalyzing palmitoylation of gasdermin-D (GSDMD), thereby promoting membrane translocation and pore formation of GSDMD. This is Palmitoyltransferase ZDHHC9 (ZDHHC9) from Pongo abelii (Sumatran orangutan).